We begin with the raw amino-acid sequence, 215 residues long: Cardiolipin synthase (CMP-forming) (215 aa).

A run of 5 helical transmembrane segments spans residues 29 to 49 (IPNI…WLIL), 60 to 80 (GWAL…GKLA), 117 to 137 (LWLT…VGIL), 158 to 178 (LMYA…ASLA), and 179 to 199 (AVFG…AGVL).

Belongs to the CDP-alcohol phosphatidyltransferase class-I family. A divalent metal cation is required as a cofactor.

Its subcellular location is the cell membrane. The enzyme catalyses a CDP-1,2-diacyl-sn-glycerol + a 1,2-diacyl-sn-glycero-3-phospho-(1'-sn-glycerol) = a cardiolipin + CMP + H(+). In terms of biological role, catalyzes the synthesis of cardiolipin (CL) (diphosphatidylglycerol) by specifically transferring a phosphatidyl group from CDP-diacylglycerol to phosphatidylglycerol (PG). This chain is Cardiolipin synthase (CMP-forming), found in Streptomyces coelicolor (strain ATCC BAA-471 / A3(2) / M145).